A 185-amino-acid chain; its full sequence is A-type ATP synthase subunit E (185 aa).

Belongs to the V-ATPase E subunit family. As to quaternary structure, has multiple subunits with at least A(3), B(3), C, D, E, F, H, I and proteolipid K(x).

Its subcellular location is the cell membrane. Functionally, component of the A-type ATP synthase that produces ATP from ADP in the presence of a proton gradient across the membrane. The polypeptide is A-type ATP synthase subunit E (Thermoplasma volcanium (strain ATCC 51530 / DSM 4299 / JCM 9571 / NBRC 15438 / GSS1)).